Reading from the N-terminus, the 336-residue chain is Vacuolar protein sorting-associated protein 26B (336 aa).

A phosphoserine mark is found at serine 302, serine 304, and serine 319.

It belongs to the VPS26 family. In terms of assembly, component of the heterotrimeric retromer cargo-selective complex (CSC), also described as vacuolar protein sorting subcomplex (VPS), formed by VPS26 (VPS26A or VPS26B), VPS29 and VPS35. The CSC has a highly elongated structure with VPS26 and VPS29 binding independently at opposite distal ends of VPS35 as central platform. The CSC is believed to associate with variable sorting nexins to form functionally distinct retromer complex variants. The originally described SNX-BAR retromer is a pentamer containing the CSC and a heterodimeric membrane-deforming subcomplex formed between SNX1 or SNX2 and SNX5 or SNX6 (also called SNX-BAR subcomplex); the respective CSC and SNX-BAR subcomplexes associate with low affinity. The CSC associates with SNX3 to form a SNX3-retromer complex. The CSC associates with SNX27, the WASH complex and the SNX-BAR subcomplex to form the SNX27-retromer complex. Interacts with VPS29, VPS35, TBC1D5, GOLPH3, SNX27.

The protein resides in the cytoplasm. Its subcellular location is the membrane. It is found in the early endosome. The protein localises to the late endosome. Its function is as follows. Acts as a component of the retromer cargo-selective complex (CSC). The CSC is believed to be the core functional component of retromer or respective retromer complex variants acting to prevent missorting of selected transmembrane cargo proteins into the lysosomal degradation pathway. The recruitment of the CSC to the endosomal membrane involves RAB7A and SNX3. The SNX-BAR retromer mediates retrograde transport of cargo proteins from endosomes to the trans-Golgi network (TGN) and is involved in endosome-to-plasma membrane transport for cargo protein recycling. The SNX3-retromer mediates the retrograde transport of WLS distinct from the SNX-BAR retromer pathway. The SNX27-retromer is believed to be involved in endosome-to-plasma membrane trafficking and recycling of a broad spectrum of cargo proteins. The CSC seems to act as recruitment hub for other proteins, such as the WASH complex and TBC1D5. May be involved in retrograde transport of SORT1 but not of IGF2R. Acts redundantly with VSP26A in SNX-27 mediated endocytic recycling of SLC2A1/GLUT1. This Pongo abelii (Sumatran orangutan) protein is Vacuolar protein sorting-associated protein 26B (VPS26B).